The sequence spans 426 residues: MTWGFVTCGPNEALVVSGCCYMKPLLVPGGRAFVWPVGQQVQRISLNTMTLQVESPCVYTSQGVPISVTGIAQVKVQGQNEDMLLTACEQFLGKSEAEINHIALVTLEGHQRAIMGSMTVEEIYKDRKKFSKQVFEVASSDLANMGITVVSYTIKDLRDEEGYLRSLGMARTAEVKRDARIGEAEARAEAHIKEAIAEEQRMAARFLNDTDIAKAQRDFELKKAAYDVEVQTKKAEAEMAYELQAAKTKQRIKEEQMQVKVIERTQEIAVQEQEIMRRERELEATIRRPAEAEKFRMEKLAEANKQRVVMEAEAEAESIRIRGEAEAFAIAAKAKAEAEQMAMKAEAYREYREAAMVEMLLDTLPKVAAEVAAPLSQAKKITMVSSGTGDIGAAKLTGEVLSIVNKVPELVKNITGVDIARSVHAG.

Belongs to the band 7/mec-2 family. Flotillin subfamily. As to quaternary structure, heterooligomeric complex of flotillins 1 and 2 and caveolins 1 and 2. In terms of tissue distribution, expressed in brain and ventral nerve cord from stage 12-16 of embryogenesis.

It localises to the cell membrane. The protein localises to the membrane. It is found in the caveola. May act as a scaffolding protein within caveolar membranes, functionally participating in formation of caveolae or caveolae-like vesicles. This chain is Flotillin-1, found in Drosophila melanogaster (Fruit fly).